The following is a 30-amino-acid chain: GTPCGESCVWIPCISSAVGCSCKNKVCYKN.

Positions 1-30 (GTPCGESCVWIPCISSAVGCSCKNKVCYKN) form a cross-link, cyclopeptide (Gly-Asn). Disulfide bonds link C4/C20, C8/C22, and C13/C27.

In terms of processing, this is a cyclic peptide.

In terms of biological role, probably participates in a plant defense mechanism. This Viola odorata (Sweet violet) protein is Cycloviolacin-O5.